A 370-amino-acid polypeptide reads, in one-letter code: Cytochrome b (370 aa).

A run of 4 helical transmembrane segments spans residues 25-45 (FGSM…FLAV), 69-90 (WMMQ…YIHI), 105-125 (WLSG…GYVL), and 170-190 (FFAL…LHIL). The heme b site is built by His-75 and His-89. Residues His-174 and His-188 each contribute to the heme b site. Residue His-193 coordinates a ubiquinone. 4 consecutive transmembrane segments (helical) span residues 218–238 (YKDM…VSFF), 280–300 (LGGA…PFTH), 312–332 (LMQL…WTAT), and 339–358 (FTTI…ISNP).

Belongs to the cytochrome b family. The cytochrome bc1 complex contains 3 respiratory subunits (MT-CYB, CYC1 and UQCRFS1), 2 core proteins (UQCRC1 and UQCRC2) and probably 6 low-molecular weight proteins. The cofactor is heme b.

The protein localises to the mitochondrion inner membrane. In terms of biological role, component of the ubiquinol-cytochrome c reductase complex (complex III or cytochrome b-c1 complex) that is part of the mitochondrial respiratory chain. The b-c1 complex mediates electron transfer from ubiquinol to cytochrome c. Contributes to the generation of a proton gradient across the mitochondrial membrane that is then used for ATP synthesis. This Chilabothrus striatus (Haitian boa constrictor) protein is Cytochrome b (MT-CYB).